Here is an 849-residue protein sequence, read N- to C-terminus: Rho guanine nucleotide exchange factor 15 (849 aa).

3 disordered regions span residues 1-146 (MSAQ…ASAP), 159-202 (GAEG…NGTP), and 277-308 (LPPLKPPKPTKVRQDISTSEELPQPDLKLPSE). Residues 18 to 31 (RIIRPRPPSRHRAP) show a composition bias toward basic residues. Residues 48-59 (QISNDASASVCT) show a composition bias toward polar residues. Positions 65–110 (PPTASLKPPALLPPSVSRTSLDSQTSPDSPSSTPSPSPVSRRSISP) are enriched in low complexity. Residues serine 107 and serine 109 each carry the phosphoserine modification. The segment covering 111–123 (EPAPCSPVPPPKP) has biased composition (pro residues). The segment covering 164–180 (AQSSDSLERCSQGSTEV) has biased composition (polar residues). Tyrosine 361 is subject to Phosphotyrosine; by EPHB2. The DH domain occupies 425–609 (RMQESLFEVV…SKIIERCSAE (185 aa)). Composition is skewed to polar residues over residues 771–786 (CSEPSTPSKTEGQSLE) and 840–849 (SSGTPDTPQP). 2 disordered regions span residues 771–803 (CSEPSTPSKTEGQSLESKAPRKHLHKNPEGWLK) and 819–849 (GEHERRKHLRQHQKLLEAVGPSSGTPDTPQP).

Interacts with EPHA4. Interacts with EPHB2. Post-translationally, phosphorylated on tyrosine residues upon EFNA1 stimulation. EPHB2-dependent phosphorylation at Tyr-361 triggers UBE3A-mediated ubiquitination. In terms of processing, ubiquitinated; UBE3A-mediated ubiquitination and degradation by the proteasome promotes EFNB1-dependent synapse formation. As to expression, at P12, expressed is detected in the CA1 region and the dentate gyrus of the hippocampus.

It localises to the cell projection. Its subcellular location is the dendrite. Specific GEF for RhoA activation. Does not activate RAC1 or CDC42. Regulates vascular smooth muscle contractility. Negatively regulates excitatory synapse development by suppressing the synapse-promoting activity of EPHB2. The polypeptide is Rho guanine nucleotide exchange factor 15 (Arhgef15) (Mus musculus (Mouse)).